Here is a 193-residue protein sequence, read N- to C-terminus: Non-specific lipid transfer protein GPI-anchored 10 (193 aa).

The first 24 residues, 1 to 24 (MASSTLLITLLISLSAFFLRMVLA), serve as a signal peptide directing secretion. Intrachain disulfides connect C30–C71, C40–C55, C56–C98, and C69–C107. N76, N87, and N103 each carry an N-linked (GlcNAc...) asparagine glycan. Positions 109 to 140 (SSFPGEAPSDSSSVAPPPSSSTGSQISQGAKN) are disordered. Residues 116-132 (PSDSSSVAPPPSSSTGS) show a composition bias toward low complexity. An N-linked (GlcNAc...) asparagine glycan is attached at N140. S168 carries the GPI-anchor amidated serine lipid modification. Positions 169–193 (SGSKSEIQLTIFALAAILPAALLLI) are cleaved as a propeptide — removed in mature form.

It belongs to the plant LTP family.

Its subcellular location is the cell membrane. Probable lipid transfer protein. The sequence is that of Non-specific lipid transfer protein GPI-anchored 10 from Arabidopsis thaliana (Mouse-ear cress).